Consider the following 907-residue polypeptide: Leucine-rich repeat-containing G-protein coupled receptor 5 (907 aa).

The first 21 residues, 1-21 (MDTSRLGVLLSLPVLLQLATG), serve as a signal peptide directing secretion. Over 22–561 (GSSPRSGVLL…EHLLDGWLIR (540 aa)) the chain is Extracellular. The LRRNT domain occupies 25–66 (PRSGVLLRGCPTHCHCEPDGRMLLRVDCSDLGLSELPSNLSV). 2 cysteine pairs are disulfide-bonded: cysteine 34–cysteine 40 and cysteine 38–cysteine 52. N-linked (GlcNAc...) asparagine glycosylation is found at asparagine 63 and asparagine 77. LRR repeat units lie at residues 67–90 (FTSY…PSLR), 91–112 (FLEE…AFTG), 115–136 (SLKV…ALQN), 139–160 (SLQS…CFSG), 163–184 (SLRH…AFRS), 187–208 (ALQA…AFGN), 211–232 (SLVV…CFDG), 235–256 (SLET…IRTL), 258–279 (NLKE…AFVG), 282–303 (SLIT…AFQH), 306–328 (ELRT…TGTA), 329–350 (NLES…VCNQ), 353–374 (NLQV…SVCQ), 375–396 (KLQK…TFQQ), 399–420 (SLRS…AFST), and 423–446 (SLIK…HGLT). The N-linked (GlcNAc...) asparagine glycan is linked to asparagine 208. Cysteines 348 and 373 form a disulfide. The cysteines at positions 479 and 541 are disulfide-linked. N-linked (GlcNAc...) asparagine glycosylation is present at asparagine 500. The helical transmembrane segment at 562–582 (IGVWTIAVLALTCNALVTSTV) threads the bilayer. Over 583 to 593 (FRSPLYISPIK) the chain is Cytoplasmic. Residues 594-614 (LLIGVIAAVNMLTGVSSAVLA) form a helical membrane-spanning segment. Residues 615 to 638 (GVDAFTFGSFARHGAWWENGVGCH) lie on the Extracellular side of the membrane. Cysteine 637 and cysteine 712 are oxidised to a cystine. A helical transmembrane segment spans residues 639-659 (VIGFLSIFASESSVFLLTLAA). Residues 660-682 (LERGFSVKYSAKFETKAPFSSLK) lie on the Cytoplasmic side of the membrane. The helical transmembrane segment at 683–703 (VIILLCALLALTMAAVPLLGG) threads the bilayer. The Extracellular segment spans residues 704–722 (SKYGASPLCLPLPFGEPST). Residues 723–743 (MGYMVALILLNSLCFLMMTIA) form a helical membrane-spanning segment. The Cytoplasmic segment spans residues 744-767 (YTKLYCNLDKGDLENIWDCSMVKH). Residues 768–788 (IALLLFTNCILNCPVAFLSFS) form a helical membrane-spanning segment. The Extracellular portion of the chain corresponds to 789–802 (SLINLTFISPEVIK). N-linked (GlcNAc...) asparagine glycosylation occurs at asparagine 792. A helical membrane pass occupies residues 803-823 (FILLVVVPLPACLNPLLYILF). The Cytoplasmic portion of the chain corresponds to 824 to 907 (NPHFKEDLVS…LSSVAFVPCL (84 aa)).

The protein belongs to the G-protein coupled receptor 1 family. In terms of assembly, identified in a complex composed of RNF43, LGR5 and RSPO1. Also interacts with other R-spondin ligands, including RSPO2, RSPO3 and RSPO4. In terms of tissue distribution, expressed in skeletal muscle, placenta, spinal cord, and various region of brain. Expressed at the base of crypts in colonic and small mucosa stem cells. In premalignant cancer expression is not restricted to the cript base. Overexpressed in cancers of the ovary, colon and liver.

The protein localises to the cell membrane. Its subcellular location is the golgi apparatus. It localises to the trans-Golgi network membrane. Its function is as follows. Receptor for R-spondins that potentiates the canonical Wnt signaling pathway and acts as a stem cell marker of the intestinal epithelium and the hair follicle. Upon binding to R-spondins (RSPO1, RSPO2, RSPO3 or RSPO4), associates with phosphorylated LRP6 and frizzled receptors that are activated by extracellular Wnt receptors, triggering the canonical Wnt signaling pathway to increase expression of target genes. In contrast to classical G-protein coupled receptors, does not activate heterotrimeric G-proteins to transduce the signal. Involved in the development and/or maintenance of the adult intestinal stem cells during postembryonic development. In Homo sapiens (Human), this protein is Leucine-rich repeat-containing G-protein coupled receptor 5 (LGR5).